The chain runs to 166 residues: Large ribosomal subunit protein uL10 (166 aa).

It belongs to the universal ribosomal protein uL10 family. As to quaternary structure, part of the ribosomal stalk of the 50S ribosomal subunit. The N-terminus interacts with L11 and the large rRNA to form the base of the stalk. The C-terminus forms an elongated spine to which L12 dimers bind in a sequential fashion forming a multimeric L10(L12)X complex.

Its function is as follows. Forms part of the ribosomal stalk, playing a central role in the interaction of the ribosome with GTP-bound translation factors. The chain is Large ribosomal subunit protein uL10 from Aromatoleum aromaticum (strain DSM 19018 / LMG 30748 / EbN1) (Azoarcus sp. (strain EbN1)).